We begin with the raw amino-acid sequence, 189 residues long: T cell receptor gamma constant 2 (189 aa).

The 95-residue stretch at 10 to 104 folds into the Ig-like domain; that stretch reads PKPTIFLPSI…NKNGIDQEII (95 aa). The cysteines at positions 32 and 88 are disulfide-linked. N-linked (GlcNAc...) asparagine glycans are attached at residues Asn-66, Asn-120, Asn-136, Asn-142, and Asn-151. A helical transmembrane segment spans residues 155–177; the sequence is YYTYLLLLLKSVVYFAIITCCLL.

In terms of assembly, gamma-delta TR is a heterodimer composed of a gamma and delta chain; disulfide-linked. The gamma-delta TR is associated with the transmembrane signaling CD3 coreceptor proteins following the stoichiometry: a single gamma-delta TR heterodimer associates with one CD3D-CD3E heterodimer, one CD3G-CD3E heterodimer and one CD247 homodimer forming a stable octameric structure. Upon activation, gamma-delta TR complex associates with FCER1G to initiate intracellular signaling.

The protein localises to the cell membrane. Constant region of T cell receptor (TR) gamma chain that participates in the antigen recognition. Gamma-delta TRs recognize a variety of self and foreign non-peptide antigens frequently expressed at the epithelial boundaries between the host and external environment, including endogenous lipids presented by MH-like protein CD1D and phosphoantigens presented by butyrophilin-like molecule BTN3A1. Upon antigen recognition induces rapid, innate-like immune responses involved in pathogen clearance and tissue repair. Binding of gamma-delta TR complex to antigen triggers phosphorylation of immunoreceptor tyrosine-based activation motifs (ITAMs) in the CD3 chains by the LCK and FYN kinases, allowing the recruitment, phosphorylation, and activation of ZAP70 that facilitates phosphorylation of the scaffolding proteins LCP2 and LAT. This lead to the formation of a supramolecular signalosome that recruits the phospholipase PLCG1, resulting in calcium mobilization and ERK activation, ultimately leading to T cell expansion and differentiation into effector cells. Gamma-delta TRs are produced through somatic rearrangement of a limited repertoire of variable (V), diversity (D), and joining (J) genes. The potential diversity of gamma-delta TRs is conferred by the unique ability to rearrange (D) genes in tandem and to utilize all three reading frames. The combinatorial diversity is considerably increased by the sequence exonuclease trimming and random nucleotide (N) region additions which occur during the V-(D)-J rearrangements. This Homo sapiens (Human) protein is T cell receptor gamma constant 2.